The sequence spans 295 residues: Protoheme IX farnesyltransferase (295 aa).

9 helical membrane-spanning segments follow: residues 7–27, 34–54, 78–98, 106–126, 131–151, 161–181, 207–227, 228–248, and 263–283; these read VTKP…FLLA, VPLF…GCVF, LIAP…GIAL, LAAL…SLYM, VYGT…GYCA, LILL…IAIF, ITLY…GGYA, GYKY…MALS, and LFMF…VDFQ.

It belongs to the UbiA prenyltransferase family. Protoheme IX farnesyltransferase subfamily.

It is found in the cell inner membrane. It carries out the reaction heme b + (2E,6E)-farnesyl diphosphate + H2O = Fe(II)-heme o + diphosphate. The protein operates within porphyrin-containing compound metabolism; heme O biosynthesis; heme O from protoheme: step 1/1. Its function is as follows. Converts heme B (protoheme IX) to heme O by substitution of the vinyl group on carbon 2 of heme B porphyrin ring with a hydroxyethyl farnesyl side group. The protein is Protoheme IX farnesyltransferase of Aeromonas salmonicida (strain A449).